A 157-amino-acid polypeptide reads, in one-letter code: UPF0303 protein NT01EI_1570 (157 aa).

The protein belongs to the UPF0303 family.

The polypeptide is UPF0303 protein NT01EI_1570 (Edwardsiella ictaluri (strain 93-146)).